Here is a 1039-residue protein sequence, read N- to C-terminus: uncharacterized protein (1039 aa).

This is an uncharacterized protein from Treponema pallidum (strain Nichols).